The sequence spans 264 residues: 3-methyl-2-oxobutanoate hydroxymethyltransferase (264 aa).

Residues Asp45 and Asp84 each contribute to the Mg(2+) site. 3-methyl-2-oxobutanoate-binding positions include 45–46, Asp84, and Lys112; that span reads DS. Glu114 serves as a coordination point for Mg(2+). Glu181 (proton acceptor) is an active-site residue.

Belongs to the PanB family. Homodecamer; pentamer of dimers. Requires Mg(2+) as cofactor.

It is found in the cytoplasm. The enzyme catalyses 3-methyl-2-oxobutanoate + (6R)-5,10-methylene-5,6,7,8-tetrahydrofolate + H2O = 2-dehydropantoate + (6S)-5,6,7,8-tetrahydrofolate. The protein operates within cofactor biosynthesis; (R)-pantothenate biosynthesis; (R)-pantoate from 3-methyl-2-oxobutanoate: step 1/2. Catalyzes the reversible reaction in which hydroxymethyl group from 5,10-methylenetetrahydrofolate is transferred onto alpha-ketoisovalerate to form ketopantoate. The protein is 3-methyl-2-oxobutanoate hydroxymethyltransferase of Shewanella piezotolerans (strain WP3 / JCM 13877).